The following is a 132-amino-acid chain: Small ribosomal subunit protein uS8 (132 aa).

This sequence belongs to the universal ribosomal protein uS8 family. Part of the 30S ribosomal subunit. Contacts proteins S5 and S12.

In terms of biological role, one of the primary rRNA binding proteins, it binds directly to 16S rRNA central domain where it helps coordinate assembly of the platform of the 30S subunit. The polypeptide is Small ribosomal subunit protein uS8 (Bradyrhizobium sp. (strain BTAi1 / ATCC BAA-1182)).